The chain runs to 179 residues: MARLQKFYKEEVIKKLQSELGLKNVMEVPRLEKITINMGVGEAVNDKKIMDNAVRDLALISGQKPVVTKSKKSIAGFKIRDGWAIGCKVTLRRQQMYEFLDRLINVSLPRTRDFRGLNPKSFDGRGNYTFGVKEHIIFPEIDFEKTDAIRGMDITFTTSAKDNAQAKALLEAFGFPFRG.

It belongs to the universal ribosomal protein uL5 family. As to quaternary structure, part of the 50S ribosomal subunit; part of the 5S rRNA/L5/L18/L25 subcomplex. Contacts the 5S rRNA and the P site tRNA. Forms a bridge to the 30S subunit in the 70S ribosome.

Its function is as follows. This is one of the proteins that bind and probably mediate the attachment of the 5S RNA into the large ribosomal subunit, where it forms part of the central protuberance. In the 70S ribosome it contacts protein S13 of the 30S subunit (bridge B1b), connecting the 2 subunits; this bridge is implicated in subunit movement. Contacts the P site tRNA; the 5S rRNA and some of its associated proteins might help stabilize positioning of ribosome-bound tRNAs. The polypeptide is Large ribosomal subunit protein uL5 (Dichelobacter nodosus (strain VCS1703A)).